Consider the following 474-residue polypeptide: Phenylalanine--tRNA ligase alpha subunit (474 aa).

L-phenylalanine contacts are provided by residues T317, 356–358, and Y396; that span reads QLE. E398 serves as a coordination point for Mg(2+). F421 lines the L-phenylalanine pocket.

This sequence belongs to the class-II aminoacyl-tRNA synthetase family. Phe-tRNA synthetase alpha subunit type 2 subfamily. Tetramer of two alpha and two beta subunits. Requires Mg(2+) as cofactor.

Its subcellular location is the cytoplasm. It catalyses the reaction tRNA(Phe) + L-phenylalanine + ATP = L-phenylalanyl-tRNA(Phe) + AMP + diphosphate + H(+). The polypeptide is Phenylalanine--tRNA ligase alpha subunit (Archaeoglobus fulgidus (strain ATCC 49558 / DSM 4304 / JCM 9628 / NBRC 100126 / VC-16)).